Consider the following 335-residue polypeptide: tRNA N6-adenosine threonylcarbamoyltransferase (335 aa).

Positions 110 and 114 each coordinate Fe cation. Substrate-binding positions include 132–136, D165, G178, and N271; that span reads LVSGG. D299 is a binding site for Fe cation.

The protein belongs to the KAE1 / TsaD family. Fe(2+) is required as a cofactor.

It is found in the cytoplasm. It catalyses the reaction L-threonylcarbamoyladenylate + adenosine(37) in tRNA = N(6)-L-threonylcarbamoyladenosine(37) in tRNA + AMP + H(+). Required for the formation of a threonylcarbamoyl group on adenosine at position 37 (t(6)A37) in tRNAs that read codons beginning with adenine. Is involved in the transfer of the threonylcarbamoyl moiety of threonylcarbamoyl-AMP (TC-AMP) to the N6 group of A37, together with TsaE and TsaB. TsaD likely plays a direct catalytic role in this reaction. This Campylobacter jejuni subsp. jejuni serotype O:2 (strain ATCC 700819 / NCTC 11168) protein is tRNA N6-adenosine threonylcarbamoyltransferase.